The sequence spans 930 residues: Isoleucine--tRNA ligase (930 aa).

The short motif at 57–67 (PYANGNIHVGH) is the 'HIGH' region element. Glu-554 lines the L-isoleucyl-5'-AMP pocket. A 'KMSKS' region motif is present at residues 595–599 (KMSKS). Position 598 (Lys-598) interacts with ATP. Cys-888, Cys-891, Cys-908, and Cys-911 together coordinate Zn(2+).

This sequence belongs to the class-I aminoacyl-tRNA synthetase family. IleS type 1 subfamily. In terms of assembly, monomer. Zn(2+) is required as a cofactor.

The protein localises to the cytoplasm. The enzyme catalyses tRNA(Ile) + L-isoleucine + ATP = L-isoleucyl-tRNA(Ile) + AMP + diphosphate. Its function is as follows. Catalyzes the attachment of isoleucine to tRNA(Ile). As IleRS can inadvertently accommodate and process structurally similar amino acids such as valine, to avoid such errors it has two additional distinct tRNA(Ile)-dependent editing activities. One activity is designated as 'pretransfer' editing and involves the hydrolysis of activated Val-AMP. The other activity is designated 'posttransfer' editing and involves deacylation of mischarged Val-tRNA(Ile). The chain is Isoleucine--tRNA ligase from Streptococcus mutans serotype c (strain ATCC 700610 / UA159).